Consider the following 41-residue polypeptide: Trypsin inhibitor 2c (41 aa).

Intrachain disulfides connect cysteine 11-cysteine 32 and cysteine 15-cysteine 28.

Its function is as follows. Inhibits bovine trypsin with a Ki of 0.174 nM and trypsin-like proteases from G.mellonella larvae. Has no activity against serine proteases chymotrypsin, subtilisin and elastase. Has no activity against cysteine proteases from beetle gut. This chain is Trypsin inhibitor 2c, found in Fagopyrum esculentum (Common buckwheat).